Reading from the N-terminus, the 288-residue chain is Diaminopimelate epimerase (288 aa).

Positions 13, 46, and 66 each coordinate substrate. Cys75 (proton donor) is an active-site residue. Residues 76-77, Asn166, Asn199, and 217-218 each bind substrate; these read GN and ER. Catalysis depends on Cys226, which acts as the Proton acceptor. Substrate is bound at residue 227-228; sequence GT.

The protein belongs to the diaminopimelate epimerase family. As to quaternary structure, homodimer.

The protein localises to the cytoplasm. The catalysed reaction is (2S,6S)-2,6-diaminopimelate = meso-2,6-diaminopimelate. It participates in amino-acid biosynthesis; L-lysine biosynthesis via DAP pathway; DL-2,6-diaminopimelate from LL-2,6-diaminopimelate: step 1/1. In terms of biological role, catalyzes the stereoinversion of LL-2,6-diaminopimelate (L,L-DAP) to meso-diaminopimelate (meso-DAP), a precursor of L-lysine and an essential component of the bacterial peptidoglycan. This is Diaminopimelate epimerase from Cupriavidus taiwanensis (strain DSM 17343 / BCRC 17206 / CCUG 44338 / CIP 107171 / LMG 19424 / R1) (Ralstonia taiwanensis (strain LMG 19424)).